The sequence spans 215 residues: Sperm acrosome membrane-associated protein 3 (215 aa).

The Cytoplasmic portion of the chain corresponds to 1–63 (MVSALRGAPL…EARSRALRRR (63 aa)). A helical; Signal-anchor for type II membrane protein transmembrane segment spans residues 64 to 84 (WCPAGIMLLALVCLLSCLLPS). Topologically, residues 85-215 (SEAKLYGRCE…LTEWVDGCDF (131 aa)) are extracellular. Positions 88–215 (KLYGRCELAR…LTEWVDGCDF (128 aa)) constitute a C-type lysozyme domain. Intrachain disulfides connect Cys-93–Cys-213, Cys-117–Cys-201, Cys-151–Cys-166, and Cys-162–Cys-180.

The protein belongs to the glycosyl hydrolase 22 family. As to quaternary structure, interacts with ASTL. In terms of processing, the processed form derives from the membrane form by proteolytic processing. As to expression, the processed form is expressed in sperm (at protein level). Expressed in testis, epididymis and placenta.

Its subcellular location is the cytoplasmic vesicle. It is found in the secretory vesicle. The protein resides in the acrosome membrane. It localises to the secreted. In terms of biological role, sperm surface membrane protein that may be involved in sperm-egg plasma membrane adhesion and fusion during fertilization. It could be a potential receptor for the egg oligosaccharide residue N-acetylglucosamine, which is present in the extracellular matrix over the egg plasma membrane. The processed form has no detectable bacteriolytic activity in vitro. This is Sperm acrosome membrane-associated protein 3 (SPACA3) from Homo sapiens (Human).